Here is a 44-residue protein sequence, read N- to C-terminus: Thaumatin-like protein 5 (44 aa).

This sequence belongs to the thaumatin family.

The polypeptide is Thaumatin-like protein 5 (Glebionis coronaria (Crown daisy)).